A 554-amino-acid polypeptide reads, in one-letter code: Asparagine--tRNA ligase, cytoplasmic (554 aa).

This sequence belongs to the class-II aminoacyl-tRNA synthetase family.

It localises to the cytoplasm. The protein localises to the cytosol. The catalysed reaction is tRNA(Asn) + L-asparagine + ATP = L-asparaginyl-tRNA(Asn) + AMP + diphosphate + H(+). In terms of biological role, catalyzes the attachment of asparagine to tRNA(Asn) in a two-step reaction: asparagine is first activated by ATP to form Asn-AMP and then transferred to the acceptor end of tRNA(Asn). The protein is Asparagine--tRNA ligase, cytoplasmic of Saccharomyces cerevisiae (strain ATCC 204508 / S288c) (Baker's yeast).